Consider the following 179-residue polypeptide: uncharacterized protein (179 aa).

Residues 1–19 (MNTNVFRLLLLGSLFSLSA) form the signal peptide. C20 is lipidated: N-palmitoyl cysteine. C20 carries S-diacylglycerol cysteine lipidation.

It localises to the cell membrane. This is an uncharacterized protein from Escherichia coli (strain K12).